Here is a 117-residue protein sequence, read N- to C-terminus: DNA-binding protein RdgB (117 aa).

The H-T-H motif DNA-binding region spans 82-102 (NHSALAKKYNVSLQWIYKIVR).

This sequence belongs to the c/mor transcriptional regulatory family.

Functionally, regulates pectin lyase production in response to DNA damage. The sequence is that of DNA-binding protein RdgB (rdgB) from Pectobacterium carotovorum subsp. carotovorum (Erwinia carotovora subsp. carotovora).